The sequence spans 642 residues: MTVQEKRPLDEANVQGDECKKPNTQPYVKGMAAIKPEYLAPISSNVLQVVEYDDDEAESGGRETSDASGNNSNNNKGKKGKNGKKGRGQNHNRDLKQKGDAVRLCMVMIDPEDDDTKCAAGGAENCKYSHNIEEYLAAKSDDIEGTCPVYEALGYCPSGLKCRWLHSHYNKETKKLIKDLEKLEREKSKNHEVNIIDRESKVALQRKKFNFDISTPVINFLESRKQKDDGKQNKEEQEASTDGNEKQEERKDNEASYVEQPFKVAEKKKINLRGAKIVSPLTTVGNLPYRRLMKTLGADVTYSEMALAVPLSQGHRPEWALPKAHVTEYPGFGVQIASSKHWAAAKAAEALYKTTLHVSEINLNCGCPIDLLFKQGQGSALLDSPPRLIRIVKAMNASSGDIPVTIKIRTGVKENKNTAVHLVNRVLEETQVAAITLHGRSRQQRYTKEADWDYIEEVGKVVKTWNEKREDEDKEGRDTNPTWFVGNGDVYSHEDWYNGVNREGVDSVMVARGALIKPWIFEEVEAQQYLDKSSTERLAMLEKYAKYAVEHWGSDEYGVSNARRFMCEFLSFTHRYVPVGILERLPAKLNERPPKWIGRNDLETLLGSSDYKDWIKITEMFLGKAGDDFLFIPKHKSNSYEN.

A compositionally biased stretch (basic and acidic residues) spans 1–10 (MTVQEKRPLD). Disordered stretches follow at residues 1–26 (MTVQEKRPLDEANVQGDECKKPNTQP) and 51–97 (EYDD…DLKQ). Positions 76-90 (KGKKGKNGKKGRGQN) are enriched in basic residues. 2 C3H1-type zinc fingers span residues 105-130 (CMVMIDPEDDDTKCAAGGAENCKYSH) and 147-168 (CPVYEALGYCPSGLKCRWLHSH). Residues 223–254 (SRKQKDDGKQNKEEQEASTDGNEKQEERKDNE) show a composition bias toward basic and acidic residues. The segment at 223 to 258 (SRKQKDDGKQNKEEQEASTDGNEKQEERKDNEASYV) is disordered. FMN contacts are provided by residues 280–282 (PLT) and Gln-335. The active-site Proton donor is the Cys-367. FMN is bound by residues Lys-407, His-438, 487-489 (NGD), and 511-512 (AR).

This sequence belongs to the Dus family. Dus3 subfamily. It depends on FMN as a cofactor.

The protein localises to the cytoplasm. The protein resides in the nucleus. The catalysed reaction is 5,6-dihydrouridine(47) in tRNA + NAD(+) = uridine(47) in tRNA + NADH + H(+). It carries out the reaction 5,6-dihydrouridine(47) in tRNA + NADP(+) = uridine(47) in tRNA + NADPH + H(+). The enzyme catalyses a 5,6-dihydrouridine in mRNA + NAD(+) = a uridine in mRNA + NADH + H(+). It catalyses the reaction a 5,6-dihydrouridine in mRNA + NADP(+) = a uridine in mRNA + NADPH + H(+). In terms of biological role, catalyzes the synthesis of dihydrouridine, a modified base found in the D-loop of most tRNAs. Specifically modifies U47 in cytoplasmic tRNAs. Catalyzes the synthesis of dihydrouridine in some mRNAs, thereby affecting their translation. In Lodderomyces elongisporus (strain ATCC 11503 / CBS 2605 / JCM 1781 / NBRC 1676 / NRRL YB-4239) (Yeast), this protein is tRNA-dihydrouridine(47) synthase [NAD(P)(+)] (DUS3).